We begin with the raw amino-acid sequence, 628 residues long: Probable potassium transport system protein Kup (628 aa).

Transmembrane regions (helical) follow at residues 56 to 76 (ILSL…VLLI), 109 to 129 (LILG…TPAI), 141 to 161 (AAPG…TLLF), 174 to 194 (FFGP…VVHI), 209 to 229 (ALAF…AVVL), 253 to 273 (WFSL…AMLL), 295 to 315 (LIVL…TAAF), 343 to 363 (IYVP…VVTF), 372 to 392 (AYGI…FFVI), 400 to 420 (WALC…FFAA), and 425 to 445 (ILDG…LMMT).

Belongs to the HAK/KUP transporter (TC 2.A.72) family.

It is found in the cell inner membrane. It carries out the reaction K(+)(in) + H(+)(in) = K(+)(out) + H(+)(out). Its function is as follows. Transport of potassium into the cell. Likely operates as a K(+):H(+) symporter. In Methylibium petroleiphilum (strain ATCC BAA-1232 / LMG 22953 / PM1), this protein is Probable potassium transport system protein Kup.